A 212-amino-acid polypeptide reads, in one-letter code: Thymidylate kinase (212 aa).

Residue 11 to 18 (GPEGAGKT) participates in ATP binding.

This sequence belongs to the thymidylate kinase family.

The enzyme catalyses dTMP + ATP = dTDP + ADP. Functionally, phosphorylation of dTMP to form dTDP in both de novo and salvage pathways of dTTP synthesis. This Streptococcus pneumoniae serotype 2 (strain D39 / NCTC 7466) protein is Thymidylate kinase.